The chain runs to 83 residues: Large ribosomal subunit protein uL23 (83 aa).

The protein belongs to the universal ribosomal protein uL23 family. Part of the 50S ribosomal subunit. Contacts protein L29.

In terms of biological role, binds to 23S rRNA. One of the proteins that surrounds the polypeptide exit tunnel on the outside of the ribosome. In Thermoplasma volcanium (strain ATCC 51530 / DSM 4299 / JCM 9571 / NBRC 15438 / GSS1), this protein is Large ribosomal subunit protein uL23.